The chain runs to 292 residues: Norajmaline N-methyltransferase (292 aa).

Residues Lys71–Val80 are SAM motif I. The segment at Lys134–Leu142 is SAM motif II. Residues Asp135–Val141 carry the Vacuolar targeting signal motif. The SAM motif III stretch occupies residues Ile161–Ile170.

The protein belongs to the class I-like SAM-binding methyltransferase superfamily. gTMT family. Homodimer. In terms of tissue distribution, mainly expressed in mature roots and, to a lesser extent, in leaves, stems and flowers.

Its subcellular location is the vacuole membrane. It catalyses the reaction norajmaline + S-adenosyl-L-methionine = ajmaline + S-adenosyl-L-homocysteine + H(+). It carries out the reaction 4-methylnorajmaline + S-adenosyl-L-methionine = 4-methylajmaline + S-adenosyl-L-homocysteine + H(+). The protein operates within alkaloid biosynthesis; ajmaline biosynthesis. Its function is as follows. N-methyltransferase involved in the biosynthesis of ajmaline-type monoterpenoid indole alkaloids (MIAs) natural products, important plant-derived pharmaceuticals used in the therapy of heart disorders. Catalyzes the indole N-methylation of norajmaline to produce ajmaline. Also able, with a lower efficiency, to mediates the conversion of 4-methylnorajmaline to 4-methylajmaline. The sequence is that of Norajmaline N-methyltransferase from Rauvolfia serpentina (Serpentine wood).